The chain runs to 371 residues: 4-hydroxy-3-methylbut-2-en-1-yl diphosphate synthase (flavodoxin) (371 aa).

Positions 270, 273, 305, and 312 each coordinate [4Fe-4S] cluster.

This sequence belongs to the IspG family. Requires [4Fe-4S] cluster as cofactor.

It catalyses the reaction (2E)-4-hydroxy-3-methylbut-2-enyl diphosphate + oxidized [flavodoxin] + H2O + 2 H(+) = 2-C-methyl-D-erythritol 2,4-cyclic diphosphate + reduced [flavodoxin]. Its pathway is isoprenoid biosynthesis; isopentenyl diphosphate biosynthesis via DXP pathway; isopentenyl diphosphate from 1-deoxy-D-xylulose 5-phosphate: step 5/6. Its function is as follows. Converts 2C-methyl-D-erythritol 2,4-cyclodiphosphate (ME-2,4cPP) into 1-hydroxy-2-methyl-2-(E)-butenyl 4-diphosphate. The polypeptide is 4-hydroxy-3-methylbut-2-en-1-yl diphosphate synthase (flavodoxin) (Shewanella pealeana (strain ATCC 700345 / ANG-SQ1)).